Consider the following 123-residue polypeptide: Molluscan insulin-related peptide 1 (123 aa).

Residues 1–31 (MAGVRLVFTKAFMVTVLLTLLLNIGVKPAEG) form the signal peptide. Pyrrolidone carboxylic acid is present on glutamine 32. 3 disulfide bridges follow: cysteine 48–cysteine 109, cysteine 60–cysteine 122, and cysteine 108–cysteine 113. Residues 68-69 (MV) constitute a propeptide that is removed on maturation. Glutamine 99 carries the post-translational modification Pyrrolidone carboxylic acid.

It belongs to the insulin family. As to quaternary structure, heterodimer of a B chain and an A chain linked by two disulfide bonds. As to expression, expressed in the cerebral light-green cells which are giant neuroendocrines cells involved in the control of growth.

It localises to the cytoplasmic vesicle. Its subcellular location is the secretory vesicle. In Lymnaea stagnalis (Great pond snail), this protein is Molluscan insulin-related peptide 1.